A 507-amino-acid chain; its full sequence is Maturase K (507 aa).

The protein belongs to the intron maturase 2 family. MatK subfamily.

The protein resides in the plastid. The protein localises to the chloroplast. In terms of biological role, usually encoded in the trnK tRNA gene intron. Probably assists in splicing its own and other chloroplast group II introns. In Umbellularia californica (California bay laurel), this protein is Maturase K.